The following is a 472-amino-acid chain: Uronate isomerase (472 aa).

This sequence belongs to the metallo-dependent hydrolases superfamily. Uronate isomerase family.

It catalyses the reaction D-glucuronate = D-fructuronate. The catalysed reaction is aldehydo-D-galacturonate = keto-D-tagaturonate. Its pathway is carbohydrate metabolism; pentose and glucuronate interconversion. This Oceanobacillus iheyensis (strain DSM 14371 / CIP 107618 / JCM 11309 / KCTC 3954 / HTE831) protein is Uronate isomerase.